The following is a 411-amino-acid chain: 2,3-bisphosphoglycerate-independent phosphoglycerate mutase (411 aa).

The protein belongs to the BPG-independent phosphoglycerate mutase family. A-PGAM subfamily.

It carries out the reaction (2R)-2-phosphoglycerate = (2R)-3-phosphoglycerate. Its pathway is carbohydrate degradation; glycolysis; pyruvate from D-glyceraldehyde 3-phosphate: step 3/5. In terms of biological role, catalyzes the interconversion of 2-phosphoglycerate and 3-phosphoglycerate. The sequence is that of 2,3-bisphosphoglycerate-independent phosphoglycerate mutase from Pyrobaculum aerophilum (strain ATCC 51768 / DSM 7523 / JCM 9630 / CIP 104966 / NBRC 100827 / IM2).